The following is a 447-amino-acid chain: Citrate synthase-like protein oryE (447 aa).

Catalysis depends on residues histidine 331 and aspartate 387.

It belongs to the citrate synthase family.

It functions in the pathway secondary metabolite biosynthesis. Citrate synthase-like protein; part of the gene cluster that mediates the biosynthesis of oryzines, natural products with an unusual maleidride backbone. The two subunits of the fungal fatty acid synthase oryfasA and oryfasB probably form octenoic acid. This fatty acid is most likely activated by the acyl-CoA ligase oryP to give octenyl-CoA before the citrate synthase-like protein oryE catalyzes condensation with oxaloacetate to form tricarboxylic acid. The next steps of the pathways are conjectural, but a favorite possible route has been proposed, beginning with decarboxylation and concomitant dehydration by the decarboxylase oryM, followed by tautomerization, which may lead to the production of a diene intermediate. Reduction of this diene intermediate could give the known metabolite piliformic acid. On the pathway to oryzine B and oryzine A, however, hydroxylation of the diene by the alpha-ketoglutarate-dependent dioxygenase oryG and lactonisation by the lactonohydrolases oryH or oryL could give oryzine B directly. Finally, enoyl reduction by the dehydrogenase oryD would then convert oryzine B into oryzine A. The polypeptide is Citrate synthase-like protein oryE (Aspergillus oryzae (strain ATCC 42149 / RIB 40) (Yellow koji mold)).